Reading from the N-terminus, the 427-residue chain is MSNNQTLFERAQRTIPGGVNSPVRAFRSVGGTPRFVARAQGAYFWDADGKRYIDYIGSWGPMIVGHVHPDVLAAVQRVLADGFSFGAPTEAEIEIAEEICKLVPSIEQVRMVSSGTEATMSALRLARGFTGRSRIVKFEGCYHGHADSLLVKAGSGLLTFGNPTSAGVPADVAKHTTVLEYNNVAALEEAFAAFGGEIAAVIVEPVAGNMNLVRGTPEFLNALRALTAKHGAVLIFDEVMCGFRVALGGAQQHYGITPDLTCLGKVIGGGMPAAAFGGRGDIMSHLAPLGGVYQAGTLSGNPVAVAAGLATLRLIQAPGFHDALADKTRRLADGLAAEARAAGVPFSADAIGGMFGLYFTEQVPASFADVTKSDIERFNRFFHLMLDAGVYFAPSAYEAGFVSSAHDDATLDATLDAARRAFAALRA.

An N6-(pyridoxal phosphate)lysine modification is found at Lys-265.

The protein belongs to the class-III pyridoxal-phosphate-dependent aminotransferase family. HemL subfamily. As to quaternary structure, homodimer. Pyridoxal 5'-phosphate serves as cofactor.

It is found in the cytoplasm. It carries out the reaction (S)-4-amino-5-oxopentanoate = 5-aminolevulinate. It participates in porphyrin-containing compound metabolism; protoporphyrin-IX biosynthesis; 5-aminolevulinate from L-glutamyl-tRNA(Glu): step 2/2. The sequence is that of Glutamate-1-semialdehyde 2,1-aminomutase from Burkholderia pseudomallei (strain 1710b).